The primary structure comprises 764 residues: Polyadenylate-binding protein, cytoplasmic and nuclear (764 aa).

The interval 36-56 (VPEAQAEGAEAAPTPTAAPHP) is disordered. 4 RRM domains span residues 60–138 (ASLY…WSQR), 148–225 (GNIF…HHIP), 241–318 (TNVY…RAQK), and 344–462 (VNLY…LAQR). Disordered regions lie at residues 375-420 (VMRD…GDRK) and 587-634 (GRGG…PRGN). Composition is skewed to basic and acidic residues over residues 387 to 399 (KDEKDKENKKEGE) and 408 to 420 (GSEKKTEKKGDRK). Positions 587 to 596 (GRGGPAGRGP) are enriched in gly residues. The segment covering 597–613 (QGIPAGIPQGLQGGPAV) has biased composition (low complexity). One can recognise a PABC domain in the interval 657 to 734 (GSFLQAQLAT…ALAVYDEYLK (78 aa)). Over residues 735-745 (TQGQQPTQQPA) the composition is skewed to polar residues. The tract at residues 735 to 764 (TQGQQPTQQPAEANGEQPKAEEQKPEEQKA) is disordered. A compositionally biased stretch (basic and acidic residues) spans 752–764 (PKAEEQKPEEQKA).

This sequence belongs to the polyadenylate-binding protein type-1 family.

Its subcellular location is the cytoplasm. It localises to the nucleus. Its function is as follows. Binds the poly(A) tail of mRNA. Appears to be an important mediator of the multiple roles of the poly(A) tail in mRNA biogenesis, stability and translation. In the nucleus, involved in both mRNA cleavage and polyadenylation. Is also required for efficient mRNA export to the cytoplasm. Acts in concert with a poly(A)-specific nuclease (PAN) to affect poly(A) tail shortening, which may occur concomitantly with either nucleocytoplasmic mRNA transport or translational initiation. In the cytoplasm, stimulates translation initiation and regulates mRNA decay through translation termination-coupled poly(A) shortening, probably mediated by PAN. This Neurospora crassa (strain ATCC 24698 / 74-OR23-1A / CBS 708.71 / DSM 1257 / FGSC 987) protein is Polyadenylate-binding protein, cytoplasmic and nuclear (pabp-1).